We begin with the raw amino-acid sequence, 155 residues long: Endoribonuclease YbeY (155 aa).

3 residues coordinate Zn(2+): His-114, His-118, and His-124.

This sequence belongs to the endoribonuclease YbeY family. Zn(2+) is required as a cofactor.

Its subcellular location is the cytoplasm. Its function is as follows. Single strand-specific metallo-endoribonuclease involved in late-stage 70S ribosome quality control and in maturation of the 3' terminus of the 16S rRNA. This chain is Endoribonuclease YbeY, found in Escherichia coli O81 (strain ED1a).